A 100-amino-acid polypeptide reads, in one-letter code: Large ribosomal subunit protein uL23 (100 aa).

The protein belongs to the universal ribosomal protein uL23 family. Part of the 50S ribosomal subunit. Contacts protein L29, and trigger factor when it is bound to the ribosome.

In terms of biological role, one of the early assembly proteins it binds 23S rRNA. One of the proteins that surrounds the polypeptide exit tunnel on the outside of the ribosome. Forms the main docking site for trigger factor binding to the ribosome. The chain is Large ribosomal subunit protein uL23 from Pseudoalteromonas atlantica (strain T6c / ATCC BAA-1087).